A 506-amino-acid chain; its full sequence is RNA2 polyprotein (506 aa).

The protein belongs to the nepoviruses RNA2 polyprotein family. Post-translationally, specific enzymatic cleavages in vivo by the P1 encoded 3C-like protease yield mature proteins.

It is found in the host cell junction. It localises to the host plasmodesma. The protein resides in the virion. Its function is as follows. The movement protein is assembled into tubules that allow the transport of virions from cell to cell. The sequence is that of RNA2 polyprotein from Beta vulgaris subsp. vulgaris (Beet).